The following is a 564-amino-acid chain: Adenine deaminase (564 aa).

It belongs to the metallo-dependent hydrolases superfamily. Adenine deaminase family. Mn(2+) serves as cofactor.

The enzyme catalyses adenine + H2O + H(+) = hypoxanthine + NH4(+). The polypeptide is Adenine deaminase (Methylobacterium sp. (strain 4-46)).